Consider the following 95-residue polypeptide: Co-chaperonin GroES (95 aa).

Belongs to the GroES chaperonin family. As to quaternary structure, heptamer of 7 subunits arranged in a ring. Interacts with the chaperonin GroEL.

It localises to the cytoplasm. In terms of biological role, together with the chaperonin GroEL, plays an essential role in assisting protein folding. The GroEL-GroES system forms a nano-cage that allows encapsulation of the non-native substrate proteins and provides a physical environment optimized to promote and accelerate protein folding. GroES binds to the apical surface of the GroEL ring, thereby capping the opening of the GroEL channel. The chain is Co-chaperonin GroES from Chlorobium phaeobacteroides (strain DSM 266 / SMG 266 / 2430).